We begin with the raw amino-acid sequence, 64 residues long: UPF0337 protein SAR0874 (64 aa).

The disordered stretch occupies residues 1–40 (MADESKFEQAKGNVKETVGNVTDNKNLENEGKEDKASGKA). Over residues 25–40 (KNLENEGKEDKASGKA) the composition is skewed to basic and acidic residues.

The protein belongs to the UPF0337 (CsbD) family.

The chain is UPF0337 protein SAR0874 from Staphylococcus aureus (strain MRSA252).